A 196-amino-acid polypeptide reads, in one-letter code: Large ribosomal subunit protein bL25 (196 aa).

Belongs to the bacterial ribosomal protein bL25 family. CTC subfamily. In terms of assembly, part of the 50S ribosomal subunit; part of the 5S rRNA/L5/L18/L25 subcomplex. Contacts the 5S rRNA. Binds to the 5S rRNA independently of L5 and L18.

Functionally, this is one of the proteins that binds to the 5S RNA in the ribosome where it forms part of the central protuberance. The polypeptide is Large ribosomal subunit protein bL25 (Treponema pallidum subsp. pallidum (strain SS14)).